Consider the following 100-residue polypeptide: Small ribosomal subunit protein uS14c (100 aa).

Belongs to the universal ribosomal protein uS14 family. As to quaternary structure, part of the 30S ribosomal subunit.

Its subcellular location is the plastid. Functionally, binds 16S rRNA, required for the assembly of 30S particles. In Epifagus virginiana (Beechdrops), this protein is Small ribosomal subunit protein uS14c.